A 378-amino-acid polypeptide reads, in one-letter code: Carbamoyl phosphate synthase small chain (378 aa).

Positions 1–188 (MLPSFPPAIL…LGRGYGVQDK (188 aa)) are CPSase. L-glutamine contacts are provided by Ser50, Gly240, and Gly242. A Glutamine amidotransferase type-1 domain is found at 192–378 (HVVAYDFGVK…FTAAMAERKQ (187 aa)). The Nucleophile role is filled by Cys268. The L-glutamine site is built by Leu269, Gln272, Asn310, Gly312, and Phe313. Catalysis depends on residues His352 and Glu354.

Belongs to the CarA family. Composed of two chains; the small (or glutamine) chain promotes the hydrolysis of glutamine to ammonia, which is used by the large (or ammonia) chain to synthesize carbamoyl phosphate. Tetramer of heterodimers (alpha,beta)4.

It carries out the reaction hydrogencarbonate + L-glutamine + 2 ATP + H2O = carbamoyl phosphate + L-glutamate + 2 ADP + phosphate + 2 H(+). The catalysed reaction is L-glutamine + H2O = L-glutamate + NH4(+). The protein operates within amino-acid biosynthesis; L-arginine biosynthesis; carbamoyl phosphate from bicarbonate: step 1/1. Its pathway is pyrimidine metabolism; UMP biosynthesis via de novo pathway; (S)-dihydroorotate from bicarbonate: step 1/3. In terms of biological role, small subunit of the glutamine-dependent carbamoyl phosphate synthetase (CPSase). CPSase catalyzes the formation of carbamoyl phosphate from the ammonia moiety of glutamine, carbonate, and phosphate donated by ATP, constituting the first step of 2 biosynthetic pathways, one leading to arginine and/or urea and the other to pyrimidine nucleotides. The small subunit (glutamine amidotransferase) binds and cleaves glutamine to supply the large subunit with the substrate ammonia. The chain is Carbamoyl phosphate synthase small chain from Ralstonia nicotianae (strain ATCC BAA-1114 / GMI1000) (Ralstonia solanacearum).